A 280-amino-acid chain; its full sequence is Pantothenate synthetase (280 aa).

31–38 serves as a coordination point for ATP; the sequence is MGNLHVGH. Histidine 38 serves as the catalytic Proton donor. Glutamine 62 provides a ligand contact to (R)-pantoate. Glutamine 62 contributes to the beta-alanine binding site. Residue 150-153 participates in ATP binding; it reads GKKD. Glutamine 156 lines the (R)-pantoate pocket. ATP-binding positions include valine 179 and 187–190; that span reads MSSR.

This sequence belongs to the pantothenate synthetase family. In terms of assembly, homodimer.

Its subcellular location is the cytoplasm. The enzyme catalyses (R)-pantoate + beta-alanine + ATP = (R)-pantothenate + AMP + diphosphate + H(+). Its pathway is cofactor biosynthesis; (R)-pantothenate biosynthesis; (R)-pantothenate from (R)-pantoate and beta-alanine: step 1/1. In terms of biological role, catalyzes the condensation of pantoate with beta-alanine in an ATP-dependent reaction via a pantoyl-adenylate intermediate. The sequence is that of Pantothenate synthetase from Xanthomonas oryzae pv. oryzae (strain MAFF 311018).